Consider the following 475-residue polypeptide: Ribonuclease Y (475 aa).

Positions 34–73 (EFERESRERRNELQRVERRLMQKEESLDKKSETLEQKDDR) are disordered. The 64-residue stretch at 165–228 (TVTVVQLPND…EVARIALEKL (64 aa)) folds into the KH domain. An HD domain is found at 291–384 (VLKHAIEVSH…VTAADAISAA (94 aa)).

Belongs to the RNase Y family.

Endoribonuclease that initiates mRNA decay. The chain is Ribonuclease Y from Alkaliphilus metalliredigens (strain QYMF).